Here is a 384-residue protein sequence, read N- to C-terminus: PqqA peptide cyclase (384 aa).

The Radical SAM core domain occupies Val-5–Ala-220. 3 residues coordinate [4Fe-4S] cluster: Cys-19, Cys-23, and Cys-26.

Belongs to the radical SAM superfamily. PqqE family. Interacts with PqqD. The interaction is necessary for activity of PqqE. The cofactor is [4Fe-4S] cluster.

It catalyses the reaction [PQQ precursor protein] + S-adenosyl-L-methionine = E-Y cross-linked-[PQQ precursor protein] + 5'-deoxyadenosine + L-methionine + H(+). It participates in cofactor biosynthesis; pyrroloquinoline quinone biosynthesis. In terms of biological role, catalyzes the cross-linking of a glutamate residue and a tyrosine residue in the PqqA protein as part of the biosynthesis of pyrroloquinoline quinone (PQQ). The protein is PqqA peptide cyclase of Acinetobacter baumannii (strain SDF).